Consider the following 333-residue polypeptide: Serine/threonine-protein phosphatase PP1-beta (333 aa).

Asp-63, His-65, Asp-91, and Asn-123 together coordinate Mn(2+). The active-site Proton donor is the His-124. Mn(2+)-binding residues include His-172 and His-247. Positions 306 to 333 (GAGGVGSNRPVTPPRNAPAAQPKKGAKK) are disordered. Residues 322–333 (APAAQPKKGAKK) show a composition bias toward low complexity.

It belongs to the PPP phosphatase family. PP-1 subfamily. As to quaternary structure, interacts with lab-1; the interaction is direct. Interacts with knl-1; the interaction is direct. Requires Mn(2+) as cofactor.

The protein localises to the cytoplasm. The protein resides in the nucleus. The catalysed reaction is O-phospho-L-seryl-[protein] + H2O = L-seryl-[protein] + phosphate. It catalyses the reaction O-phospho-L-threonyl-[protein] + H2O = L-threonyl-[protein] + phosphate. Serine/threonine-protein phosphatase essential for chromosomal dynamics during meiosis and mitosis. Antagonizes the function of air-2 in the regulation of chromosome cohesion. Dephosphorylates histone H3 at 'Ser-10'. Also involved in the activation of chloride channel clh-3 during cell swelling and meiotic maturation. Essential for embryogenesis. The sequence is that of Serine/threonine-protein phosphatase PP1-beta (gsp-2) from Caenorhabditis briggsae.